A 650-amino-acid chain; its full sequence is AP-1-like transcription factor YAP1 (650 aa).

The segment at 1–89 (MSVSTAKRSL…AFRERKERKM (89 aa)) is disordered. Ser-9, Ser-14, and Ser-17 each carry phosphoserine. 3 stretches are compositionally biased toward basic and acidic residues: residues 22 to 50 (EGSKSRHDEIENEHRRTGTRDGEDSEQPK), 58 to 68 (KKQDLDPETKQ), and 80 to 89 (AFRERKERKM). Short sequence motifs (bipartite nuclear localization signal) lie at residues 35 to 42 (HRRTGTRD) and 68 to 75 (QKRTAQNR). In terms of domain architecture, bZIP spans 64-127 (PETKQKRTAQ…ITLVNELKKY (64 aa)). Positions 67–90 (KQKRTAQNRAAQRAFRERKERKMK) are basic motif. The leucine-zipper stretch occupies residues 92–120 (LEKKVQSLESIQQQNEVEATFLRDQLITL). 2 disordered regions span residues 149–169 (HFSKNNVNHSNSEPIDTPNDD) and 183–251 (QYPL…PNSS). Over residues 150–162 (FSKNNVNHSNSEP) the composition is skewed to polar residues. Position 165 is a phosphothreonine (Thr-165). Positions 195–209 (SKNVGKQLPSPNDPS) are enriched in polar residues. Ser-204 carries the phosphoserine modification. The segment at 220–378 (QKKLSDATDS…YENSFSGFGR (159 aa)) is transcription activation 1. Residues 226-246 (ATDSSSATLDSLSNSNDVLNN) are compositionally biased toward low complexity. The n-CRD stretch occupies residues 303 to 315 (CSKMNQVCGTRQC). Intrachain disulfides connect Cys-303/Cys-598, Cys-310/Cys-629, Cys-598/Cys-620, Cys-598/Cys-629, and Cys-620/Cys-629. Ser-372 carries the post-translational modification Phosphoserine. Low complexity predominate over residues 392-414 (DNSTGSTDSTGSTGNKNKKNNNN). Disordered stretches follow at residues 392–419 (DNSTGSTDSTGSTGNKNKKNNNNSDDVL), 510–532 (LFGEFLEDDDDDKKAANMSDDES), and 551–591 (LQSV…VPSK). Residues 430–537 (NQVTNFFSPG…SDDESSLIKN (108 aa)) form a transcription activation 2 region. Residue Ser-528 is modified to Phosphoserine. Residues 551 to 570 (LQSVPGNESEISQKNGSSLQ) show a composition bias toward polar residues. The span at 571–580 (NADKINNGND) shows a compositional bias: low complexity. The c-CRD stretch occupies residues 598 to 629 (CSEIWDRITTHPKYSDIDVDGLCSELMAKAKC). The short motif at 614–621 (IDVDGLCS) is the Nuclear export signal element.

The protein belongs to the bZIP family. YAP subfamily. In terms of assembly, interacts independent of oxidation state in the cytoplasm with the karyopherin PSE1/KAP121 (and less strongly with KAP123). The reduced form of YAP1 interacts in the nucleus with the nuclear export protein CRM1, and in the cytoplasm with YBP1 and the peroxiredoxin HYR1/GPX3/ORP1. Interacts with RBG1. Post-translationally, depending on the oxidative stress inducing agent, YAP1 can undergo two distinct conformational changes, both involving disulfide bond formation, and both masking the nuclear export signal, thus abolishing nuclear export by CRM1/exportin 1. The disulfide stress-inducing agent diamide leads to the formation of one of three possible disulfide bonds in the c-CRD. Peroxide stress induces the formation of the HYR1/GPX3- and YBP1-dependent interdomain disulfide bond between Cys-303 and Cys-598 (causing nuclear localization of YAP1), and the possibly stabilizing bond between Cys-310 and Cys-629 (required for full activity of YAP1).

The protein resides in the nucleus. It localises to the cytoplasm. Functionally, transcription activator involved in oxidative stress response and redox homeostasis. Regulates the transcription of genes encoding antioxidant enzymes and components of the cellular thiol-reducing pathways, including the thioredoxin system (TRX2, TRR1), the glutaredoxin system (GSH1, GLR1), superoxide dismutase (SOD1, SOD2), glutathione peroxidase (GPX2), and thiol-specific peroxidases (TSA1, AHP1). The induction of some of these genes requires the cooperative action of both, YAP1 and SKN7. Preferentially binds to promoters with the core binding site 5'-TTA[CG]TAA-3'. Activity of the transcription factor is controlled through oxidation of specific cysteine residues resulting in the alteration of its subcellular location. Oxidative stress (as well as carbon stress, but not increased temperature, acidic pH, or ionic stress) induces nuclear accumulation and as a result YAP1 transcriptional activity. Activation by hydrogen peroxide or thiol-reactive chemicals elicit distinct adaptive gene responses. Nuclear export is restored when disulfide bonds are reduced by thioredoxin (TRX2), whose expression is controlled by YAP1, providing a mechanism for negative autoregulation. When overexpressed, YAP1 confers pleiotropic drug-resistance and increases cellular tolerance to cadmium, iron chelators and zinc. The sequence is that of AP-1-like transcription factor YAP1 from Saccharomyces cerevisiae (strain ATCC 204508 / S288c) (Baker's yeast).